A 407-amino-acid polypeptide reads, in one-letter code: MWDLALIFLAAACVFSLGVTLWVICSHFFTVHIPAAVGHPVKLRVLHCIFQLLLTWGMIFEKLRICSMPQFFCFMQDLPPLKYDPDVVVTDFRFGTIPVKLYQPKASTCTLKPGIVYYHGGGGVMGSLKTHHGICSRLCKESDSVVLAVGYRKLPKHKFPVPVRDCLVATIHFLKSLDAYGVDPARVVVCGDSFGGAIAAVVCQQLVDRPDLPRIRAQILIYAILQALDLQTPSFQQRKNIPLLTWSFICYFFFQNLDFSSSWQEVIMKGAHLPAEVWEKYRKWLGPENIPERFKERGYQLKPHEPMNEAAYLEVSVVLDVMCSPLIAEDDIVSQLPETCIVSCEYDALRDNSLLYKKRLEDLGVPVTWHHMEDGFHGVLRTIDMSFLHFPCSMRILSALVQFVKGL.

Residues 119-121 (HGG) carry the Involved in the stabilization of the negatively charged intermediate by the formation of the oxyanion hole motif. Catalysis depends on residues S193, D347, and H377.

This sequence belongs to the 'GDXG' lipolytic enzyme family.

This chain is Arylacetamide deacetylase-like 3 (AADACL3), found in Homo sapiens (Human).